Reading from the N-terminus, the 144-residue chain is Cytochrome c oxidase subunit 4 isoform 1, mitochondrial (144 aa).

Residues 1–73 (SVVKSEDFSL…SFAEMNRGSN (73 aa)) lie on the Mitochondrial matrix side of the membrane. Lys-4 carries the N6-acetyllysine; alternate modification. Lys-4 carries the N6-succinyllysine; alternate modification. Lys-28 is modified (N6-acetyllysine). A phosphoserine mark is found at Ser-31 and Ser-33. At Lys-35 the chain carries N6-acetyllysine; alternate. At Lys-35 the chain carries N6-succinyllysine; alternate. Lys-42 bears the N6-acetyllysine mark. A helical membrane pass occupies residues 74–99 (EWKTVVGGAMFFIGFTALIIMWQKHY). Over 100-144 (VYGPLPQTFDKEWVGKQTKRMLDMKVNPIQGLASKWDYEKNEWKK) the chain is Mitochondrial intermembrane.

This sequence belongs to the cytochrome c oxidase IV family. Component of the cytochrome c oxidase (complex IV, CIV), a multisubunit enzyme composed of 14 subunits. The complex is composed of a catalytic core of 3 subunits MT-CO1, MT-CO2 and MT-CO3, encoded in the mitochondrial DNA, and 11 supernumerary subunits COX4I, COX5A, COX5B, COX6A, COX6B, COX6C, COX7A, COX7B, COX7C, COX8 and NDUFA4, which are encoded in the nuclear genome. The complex exists as a monomer or a dimer and forms supercomplexes (SCs) in the inner mitochondrial membrane with NADH-ubiquinone oxidoreductase (complex I, CI) and ubiquinol-cytochrome c oxidoreductase (cytochrome b-c1 complex, complex III, CIII), resulting in different assemblies (supercomplex SCI(1)III(2)IV(1) and megacomplex MCI(2)III(2)IV(2)). Interacts with PHB2; the interaction decreases in absence of SPHK2. Interacts with AFG1L. Interacts with ABCB7; this interaction allows the regulation of cellular iron homeostasis and cellular reactive oxygen species (ROS) levels in cardiomyocytes. Interacts with FLVCR2; this interaction occurs in the absence of heme and is disrupted upon heme binding. Interacts with IRGC.

The protein resides in the mitochondrion inner membrane. It participates in energy metabolism; oxidative phosphorylation. Functionally, component of the cytochrome c oxidase, the last enzyme in the mitochondrial electron transport chain which drives oxidative phosphorylation. The respiratory chain contains 3 multisubunit complexes succinate dehydrogenase (complex II, CII), ubiquinol-cytochrome c oxidoreductase (cytochrome b-c1 complex, complex III, CIII) and cytochrome c oxidase (complex IV, CIV), that cooperate to transfer electrons derived from NADH and succinate to molecular oxygen, creating an electrochemical gradient over the inner membrane that drives transmembrane transport and the ATP synthase. Cytochrome c oxidase is the component of the respiratory chain that catalyzes the reduction of oxygen to water. Electrons originating from reduced cytochrome c in the intermembrane space (IMS) are transferred via the dinuclear copper A center (CU(A)) of subunit 2 and heme A of subunit 1 to the active site in subunit 1, a binuclear center (BNC) formed by heme A3 and copper B (CU(B)). The BNC reduces molecular oxygen to 2 water molecules using 4 electrons from cytochrome c in the IMS and 4 protons from the mitochondrial matrix. This chain is Cytochrome c oxidase subunit 4 isoform 1, mitochondrial (COX4I1), found in Hylobates agilis (Agile gibbon).